The following is a 453-amino-acid chain: Allantoinase (453 aa).

Positions 59, 61, 146, 186, 242, and 315 each coordinate Zn(2+). Position 146 is an N6-carboxylysine (Lys-146).

The protein belongs to the metallo-dependent hydrolases superfamily. Allantoinase family. In terms of assembly, homotetramer. Zn(2+) is required as a cofactor. Post-translationally, carboxylation allows a single lysine to coordinate two zinc ions.

It carries out the reaction (S)-allantoin + H2O = allantoate + H(+). The protein operates within nitrogen metabolism; (S)-allantoin degradation; allantoate from (S)-allantoin: step 1/1. Functionally, catalyzes the conversion of allantoin (5-ureidohydantoin) to allantoic acid by hydrolytic cleavage of the five-member hydantoin ring. The sequence is that of Allantoinase from Salmonella gallinarum (strain 287/91 / NCTC 13346).